Consider the following 355-residue polypeptide: DNA polymerase IV (355 aa).

Residues 4-185 (IIHIDMDCYF…LSLGKIPGVG (182 aa)) enclose the UmuC domain. Mg(2+) contacts are provided by Asp-8 and Asp-103. Glu-104 is a catalytic residue.

It belongs to the DNA polymerase type-Y family. As to quaternary structure, monomer. Mg(2+) is required as a cofactor.

The protein resides in the cytoplasm. It carries out the reaction DNA(n) + a 2'-deoxyribonucleoside 5'-triphosphate = DNA(n+1) + diphosphate. Its function is as follows. Poorly processive, error-prone DNA polymerase involved in untargeted mutagenesis. Copies undamaged DNA at stalled replication forks, which arise in vivo from mismatched or misaligned primer ends. These misaligned primers can be extended by PolIV. Exhibits no 3'-5' exonuclease (proofreading) activity. May be involved in translesional synthesis, in conjunction with the beta clamp from PolIII. The chain is DNA polymerase IV from Shewanella amazonensis (strain ATCC BAA-1098 / SB2B).